Here is a 256-residue protein sequence, read N- to C-terminus: Deoxyribose-phosphate aldolase (256 aa).

Catalysis depends on D102, which acts as the Proton donor/acceptor. Catalysis depends on K165, which acts as the Schiff-base intermediate with acetaldehyde. K197 functions as the Proton donor/acceptor in the catalytic mechanism.

It belongs to the DeoC/FbaB aldolase family. DeoC type 2 subfamily.

It localises to the cytoplasm. The enzyme catalyses 2-deoxy-D-ribose 5-phosphate = D-glyceraldehyde 3-phosphate + acetaldehyde. Its pathway is carbohydrate degradation; 2-deoxy-D-ribose 1-phosphate degradation; D-glyceraldehyde 3-phosphate and acetaldehyde from 2-deoxy-alpha-D-ribose 1-phosphate: step 2/2. Its function is as follows. Catalyzes a reversible aldol reaction between acetaldehyde and D-glyceraldehyde 3-phosphate to generate 2-deoxy-D-ribose 5-phosphate. The protein is Deoxyribose-phosphate aldolase of Shewanella oneidensis (strain ATCC 700550 / JCM 31522 / CIP 106686 / LMG 19005 / NCIMB 14063 / MR-1).